The sequence spans 161 residues: RNA pyrophosphohydrolase (161 aa).

One can recognise a Nudix hydrolase domain in the interval 12-154 (PYRPGVGMMI…KRKLYQAVVK (143 aa)). The Nudix box signature appears at 46 to 67 (GGIVPGETPSIAAMREMLEEIG).

The protein belongs to the Nudix hydrolase family. RppH subfamily. It depends on a divalent metal cation as a cofactor.

Its function is as follows. Accelerates the degradation of transcripts by removing pyrophosphate from the 5'-end of triphosphorylated RNA, leading to a more labile monophosphorylated state that can stimulate subsequent ribonuclease cleavage. The polypeptide is RNA pyrophosphohydrolase (Rickettsia rickettsii (strain Iowa)).